Here is a 228-residue protein sequence, read N- to C-terminus: Max-interacting protein 1 (228 aa).

Disordered regions lie at residues 29–76 (GYAS…NELE) and 162–228 (GSTI…SFTS). The segment covering 43 to 56 (QHSKPPRRLSRAQK) has biased composition (basic residues). Over residues 57–70 (HSSGSSNTSTANRS) the composition is skewed to polar residues. In terms of domain architecture, bHLH spans 67 to 119 (ANRSTHNELEKNRRAHLRLCLERLKVLIPLGPDCTRHTTLGLLNKAKAHIKKL). The span at 173 to 183 (EREEIEVDVES) shows a compositional bias: acidic residues. Residues 216 to 228 (GYSSASVKLSFTS) show a composition bias toward polar residues.

As to quaternary structure, efficient DNA binding requires dimerization with another bHLH protein. Binds DNA as a heterodimer with MAX. Interacts with SMC3. Interacts with RNF17.

The protein localises to the nucleus. In terms of biological role, transcriptional repressor. MXI1 binds with MAX to form a sequence-specific DNA-binding protein complex which recognizes the core sequence 5'-CAC[GA]TG-3'. MXI1 thus antagonizes MYC transcriptional activity by competing for MAX. In Rattus norvegicus (Rat), this protein is Max-interacting protein 1 (Mxi1).